The following is a 317-amino-acid chain: DNA-directed RNA polymerase subunit alpha (317 aa).

The alpha N-terminal domain (alpha-NTD) stretch occupies residues 1 to 234 (MKQFNKPEFG…SHFDVFTTLA (234 aa)). Residues 249–317 (EEKELDKPVE…AALELTFKQN (69 aa)) form an alpha C-terminal domain (alpha-CTD) region.

The protein belongs to the RNA polymerase alpha chain family. In terms of assembly, homodimer. The RNAP catalytic core consists of 2 alpha, 1 beta, 1 beta' and 1 omega subunit. When a sigma factor is associated with the core the holoenzyme is formed, which can initiate transcription.

The enzyme catalyses RNA(n) + a ribonucleoside 5'-triphosphate = RNA(n+1) + diphosphate. In terms of biological role, DNA-dependent RNA polymerase catalyzes the transcription of DNA into RNA using the four ribonucleoside triphosphates as substrates. The polypeptide is DNA-directed RNA polymerase subunit alpha (Mesoplasma florum (strain ATCC 33453 / NBRC 100688 / NCTC 11704 / L1) (Acholeplasma florum)).